The sequence spans 280 residues: Phosphatidylserine decarboxylase proenzyme (280 aa).

Active-site charge relay system; for autoendoproteolytic cleavage activity residues include Asp-88, His-144, and Ser-247. Ser-247 (schiff-base intermediate with substrate; via pyruvic acid; for decarboxylase activity) is an active-site residue. Residue Ser-247 is modified to Pyruvic acid (Ser); by autocatalysis.

It belongs to the phosphatidylserine decarboxylase family. PSD-B subfamily. Prokaryotic type I sub-subfamily. In terms of assembly, heterodimer of a large membrane-associated beta subunit and a small pyruvoyl-containing alpha subunit. Pyruvate serves as cofactor. Is synthesized initially as an inactive proenzyme. Formation of the active enzyme involves a self-maturation process in which the active site pyruvoyl group is generated from an internal serine residue via an autocatalytic post-translational modification. Two non-identical subunits are generated from the proenzyme in this reaction, and the pyruvate is formed at the N-terminus of the alpha chain, which is derived from the carboxyl end of the proenzyme. The autoendoproteolytic cleavage occurs by a canonical serine protease mechanism, in which the side chain hydroxyl group of the serine supplies its oxygen atom to form the C-terminus of the beta chain, while the remainder of the serine residue undergoes an oxidative deamination to produce ammonia and the pyruvoyl prosthetic group on the alpha chain. During this reaction, the Ser that is part of the protease active site of the proenzyme becomes the pyruvoyl prosthetic group, which constitutes an essential element of the active site of the mature decarboxylase.

It is found in the cell membrane. It carries out the reaction a 1,2-diacyl-sn-glycero-3-phospho-L-serine + H(+) = a 1,2-diacyl-sn-glycero-3-phosphoethanolamine + CO2. The protein operates within phospholipid metabolism; phosphatidylethanolamine biosynthesis; phosphatidylethanolamine from CDP-diacylglycerol: step 2/2. Catalyzes the formation of phosphatidylethanolamine (PtdEtn) from phosphatidylserine (PtdSer). In Stenotrophomonas maltophilia (strain R551-3), this protein is Phosphatidylserine decarboxylase proenzyme.